We begin with the raw amino-acid sequence, 335 residues long: MKNMEQIDFVVTWVNNKDVDWCKRKSEFEKEYNIFQDLNSEERYREWGFMKYWFRAVEKYAPWVNKIYFITEGHVPNWLDVNHPKLVHVKHEDYIEKQFLPTFNSNVIEMNLIHLKDLSEKFVLFNDDTFINDFVKQSDFFENNLPKDTGIFSPLIPRENSLTPIVLNNMEIINKYFSKKKILEQNFSKFFNIKYGKHLLKNICLLPWSDLLGFYNSHIPVSYCKSNFLEVYEKEYDIFNLTFKNKFRNKNEINHWLIRYWQLSSGNFIPRNINFGKNYAISNDPTDIINELKFSKYKIICINDGESIDSFDEVKDLMIDAFEKKFPEKSSFEKK.

Belongs to the stealth family.

The polypeptide is Capsular polysaccharide phosphotransferase WcwK (wcwK) (Streptococcus pneumoniae).